Here is a 310-residue protein sequence, read N- to C-terminus: Beta-carotene 3-hydroxylase 1, chloroplastic (310 aa).

A chloroplast-targeting transit peptide spans 1–51; it reads MAAGLSTAVTFKPLHRSFSSSSTDFRLRLPKSLSGFSPSLRFKRFSVCYVV. 2 consecutive transmembrane segments (helical) span residues 98-118 and 132-152; these read YLIA…MAVY and MLEM…MEFW. A Fatty acid hydroxylase domain is found at 145–272; it reads AAVGMEFWAR…KFNGVPYGLF (128 aa). The short motif at 157-162 is the Histidine box-1 element; that stretch reads HRALWH. Positions 169–173 match the Histidine box-2 motif; the sequence is HESHH. 2 consecutive transmembrane segments (helical) span residues 183–203 and 208–228; these read NDVF…YGFF and VPGL…AYMF. The Histidine box-3 signature appears at 230–235; the sequence is HDGLVH. The short motif at 256–260 is the Histidine box-4 element; sequence HQLHH.

This sequence belongs to the sterol desaturase family. In terms of assembly, homodimer. In terms of tissue distribution, expressed in leaves, flowers, stems, roots and siliques.

It is found in the plastid. The protein localises to the chloroplast membrane. The enzyme catalyses all-trans-beta-carotene + 4 reduced [2Fe-2S]-[ferredoxin] + 2 O2 + 4 H(+) = all-trans-zeaxanthin + 4 oxidized [2Fe-2S]-[ferredoxin] + 2 H2O. Nonheme diiron monooxygenase involved in the biosynthesis of xanthophylls. Specific for beta-ring hydroxylations of beta-carotene. Also has a low activity toward the beta- and epsilon-rings of alpha-carotene. No activity with acyclic carotenoids such as lycopene and neurosporene. Uses ferredoxin as an electron donor. This is Beta-carotene 3-hydroxylase 1, chloroplastic (BETA-OHASE 1) from Arabidopsis thaliana (Mouse-ear cress).